The sequence spans 189 residues: MAQNGSEGPLLAGVAGRYALALYELAHDQGQVDDVAKNLDAFDALYRESDDLRRLVRSPAYSAAEQTAAVGALLDRAGISGLAANFIKLTADNRRLFALPGMIRAYREKVRESKGIIRAEVRVAEKPSDAVIEDIKASLRDVAKSEIDLDLHIDPSLIGGIVVKMGSRMVDASLRTKLNSIRLAMREAR.

The protein belongs to the ATPase delta chain family. As to quaternary structure, F-type ATPases have 2 components, F(1) - the catalytic core - and F(0) - the membrane proton channel. F(1) has five subunits: alpha(3), beta(3), gamma(1), delta(1), epsilon(1). F(0) has three main subunits: a(1), b(2) and c(10-14). The alpha and beta chains form an alternating ring which encloses part of the gamma chain. F(1) is attached to F(0) by a central stalk formed by the gamma and epsilon chains, while a peripheral stalk is formed by the delta and b chains.

It is found in the cell inner membrane. Its function is as follows. F(1)F(0) ATP synthase produces ATP from ADP in the presence of a proton or sodium gradient. F-type ATPases consist of two structural domains, F(1) containing the extramembraneous catalytic core and F(0) containing the membrane proton channel, linked together by a central stalk and a peripheral stalk. During catalysis, ATP synthesis in the catalytic domain of F(1) is coupled via a rotary mechanism of the central stalk subunits to proton translocation. Functionally, this protein is part of the stalk that links CF(0) to CF(1). It either transmits conformational changes from CF(0) to CF(1) or is implicated in proton conduction. The protein is ATP synthase subunit delta of Methylorubrum extorquens (strain PA1) (Methylobacterium extorquens).